A 394-amino-acid chain; its full sequence is MATTGRRLRPPSPNNNRSRTISSSISLPVSLNASLSSSTSSSSSSSPSNSSKRVMITRSQSTTRSSRPIGSSDSKSGENIIPARNSASRSQEINNGRSRESFARYLEQRTRGSPRSNASSRGVKPGASSPSAWALSPGRLSTMKTPLSSSAPTTSMCMTPPESPVSKAKIRSGGGGAVAGVLKYFMAQKKVSPVQEEDYHRFRIFQNRLLQWRFVNARTEATMANLKINVEDQLFWVWLRIYKMRNYVVENLIEIQRLRQDIKVREVLSLQMPLLNEWSKIDAKNSEALSKLTRKLHALSVRLPLVHGATIDMVSIHEEMVIAIEVMDEIEDVIIKFLPRVEIILYELTELIGMFNQELLYFEEMDESLLSIPLFTAKESSLRVHILQKTEEQR.

Residues 1 to 171 (MATTGRRLRP…ESPVSKAKIR (171 aa)) form a disordered region. Over residues 14–67 (NNNRSRTISSSISLPVSLNASLSSSTSSSSSSSPSNSSKRVMITRSQSTTRSSR) the composition is skewed to low complexity. The span at 85-96 (NSASRSQEINNG) shows a compositional bias: polar residues. Residues 97 to 110 (RSRESFARYLEQRT) show a composition bias toward basic and acidic residues. Polar residues-rich tracts occupy residues 111-120 (RGSPRSNASS) and 142-157 (TMKT…TSMC). The QWRF motif motif lies at 211 to 214 (QWRF).

It belongs to the QWRF family.

The polypeptide is QWRF motif-containing protein 7 (QWRF7) (Arabidopsis thaliana (Mouse-ear cress)).